Consider the following 865-residue polypeptide: Centrosomal protein of 97 kDa (865 aa).

LRR repeat units lie at residues 37 to 58, 59 to 80, 81 to 102, 103 to 124, 125 to 146, 147 to 168, 171 to 192, and 196 to 205; these read DIHT…EKCK, RLIQ…AKLT, LLRV…KELV, HLEW…NSCT, ALQH…SKLV, SLKT…PAYL, SLAI…SFLA, and ELEQLSIMNN. An LRRCT domain is found at 211 to 249; that stretch reads TPSIPGFDYRPYIVSWCLNLRVLDGYVISQKESLKAEWL. Residues 300 to 750 are CCP110-binding; it reads HQRQLMNQSQ…RYGKESDLGD (451 aa). 3 positions are modified to phosphoserine: Ser-308, Ser-413, and Ser-500. A disordered region spans residues 506-529; sequence ESTEQKQSDIKKPENTQPENKETI. The segment covering 508–527 has biased composition (basic and acidic residues); it reads TEQKQSDIKKPENTQPENKE. Phosphoserine is present on Ser-530. Phosphothreonine is present on Thr-542. An IQ domain is found at 558–587; that stretch reads LNDAATKLQACWRGFYARNYNPQAKDVRYE. The interval 587 to 865 is interaction with MPHOSPH9; sequence EIRLRRMQEH…FQLLHVGVTV (279 aa). The tract at residues 715–769 is disordered; it reads QHSLDFEKSSTEGSESSIMGNSIDTVRYGKESDLGDVSEEHGEWNKESSNNEQDN. The span at 725 to 738 shows a compositional bias: polar residues; it reads TEGSESSIMGNSID. Residues 741 to 760 are compositionally biased toward basic and acidic residues; sequence RYGKESDLGDVSEEHGEWNK. Ser-763 carries the post-translational modification Phosphoserine.

In terms of assembly, interacts with CALM1, CEP76, KIF24 and TALPID3. Interacts with CCP110. ENKD1 competes with CEP97 for binding to CCP110, destabilizing the interaction between CP110 and CEP97 which promotes the removal of CCP110 and CEP97 from the mother centriole and allows the initiation of ciliogenesis. Via its interaction with CCP110, may indirectly interact with HERC2 and NEURL4. Interacts with MPHOSPH9.

The protein localises to the cytoplasm. It is found in the cytoskeleton. The protein resides in the microtubule organizing center. Its subcellular location is the centrosome. It localises to the centriole. Functionally, acts as a key negative regulator of ciliogenesis in collaboration with CCP110 by capping the mother centriole thereby preventing cilia formation. Required for recruitment of CCP110 to the centrosome. This chain is Centrosomal protein of 97 kDa (CEP97), found in Homo sapiens (Human).